The chain runs to 295 residues: Sperm acrosome membrane-associated protein 1 (295 aa).

Residues 1 to 29 form the signal peptide; the sequence is MSPGGAGCSAGLLLTVGWLLLAGLQSTCG. Residues 30-220 lie on the Extracellular side of the membrane; that stretch reads INVTAVQDPS…SRPDTDAVLV (191 aa). The segment at 39 to 71 is disordered; sequence SLVSEGENEGEEEAENDSEVENEPQAEAEQDVS. Residues 44–68 are compositionally biased toward acidic residues; it reads GENEGEEEAENDSEVENEPQAEAEQ. Asn-72 is a glycosylation site (N-linked (GlcNAc...) asparagine). A helical membrane pass occupies residues 221-241; it reads FVLTIGVIICIFVIFVLIFII. Topologically, residues 242-295 are cytoplasmic; that stretch reads VNWATVKDFWASKASTTEIQSELSSMKYKDSTSLDQSPTEIPGHEDDALSEWNE. Phosphoserine is present on Ser-256. The tract at residues 263–295 is disordered; it reads ELSSMKYKDSTSLDQSPTEIPGHEDDALSEWNE. Tyr-269 carries the phosphotyrosine modification. A phosphoserine mark is found at Ser-278 and Ser-291.

As to quaternary structure, interacts with CYLC1; the interaction may be relevant for proper acrosome attachment to the nuclear envelope. Post-translationally, N-glycosylated. Detected in spermatozoa (at protein level).

The protein resides in the cytoplasmic vesicle. It localises to the secretory vesicle. The protein localises to the acrosome inner membrane. Functionally, plays a role in acrosome expansion and establishment of normal sperm morphology during spermatogenesis. Important for male fertility. The chain is Sperm acrosome membrane-associated protein 1 from Sus scrofa (Pig).